A 418-amino-acid chain; its full sequence is Failed axon connections (418 aa).

2 disordered regions span residues 1 to 95 and 361 to 418; these read MASE…QKFN and AHIP…EETK. 2 stretches are compositionally biased toward low complexity: residues 9 to 19 and 28 to 45; these read PAEETPAVAAA and SAAPPADSAAAPAAAPAV. Composition is skewed to basic and acidic residues over residues 46–77 and 364–418; these read EKAEDADGEKKDGEAGKQDKQQDGEEPKKDEA and PKPE…EETK.

The protein belongs to the FAX family.

Its function is as follows. Together with Abl, involved in embryonic axonal development. The sequence is that of Failed axon connections (fax) from Drosophila melanogaster (Fruit fly).